Consider the following 305-residue polypeptide: MPIKIPDSLPAKEVLTNENIFVMDEHRALHQDVRPLRIAILNLMPTKITTETQLLRLIGNTPIQVEIELLHPKTHVSKNTPEEHLTKFYKTFDEVKDEKFDGLIITGAPVEQMEFEEVNYWEELKKIMDWSVHNVYSTFHICWGAQAALYHHYGIKKYPLKEKMFGIFPHRICKPNTMLLRGFDDCFYAPHSRHTEVRREDIEKVGEIDILSDSEEAGVYIMKTRGGRQVFVTGHSEYDQFTLKEEYERDLAKGLKIKMPKNYFPDDDPTKPPVVNWRGHANLLFSNWLNYYVYQETPFDLNELK.

Residue Cys142 is the Acyl-thioester intermediate of the active site. Substrate contacts are provided by Lys163 and Ser192. His235 acts as the Proton acceptor in catalysis. Residue Glu237 is part of the active site. Arg249 serves as a coordination point for substrate.

This sequence belongs to the MetA family.

The protein resides in the cytoplasm. The enzyme catalyses L-homoserine + acetyl-CoA = O-acetyl-L-homoserine + CoA. Its pathway is amino-acid biosynthesis; L-methionine biosynthesis via de novo pathway; O-acetyl-L-homoserine from L-homoserine: step 1/1. Transfers an acetyl group from acetyl-CoA to L-homoserine, forming acetyl-L-homoserine. The sequence is that of Homoserine O-acetyltransferase from Acetivibrio thermocellus (strain ATCC 27405 / DSM 1237 / JCM 9322 / NBRC 103400 / NCIMB 10682 / NRRL B-4536 / VPI 7372) (Clostridium thermocellum).